We begin with the raw amino-acid sequence, 404 residues long: Probable tRNA sulfurtransferase (404 aa).

Residues Q60–E165 form the THUMP domain. Residues M183 to L184, H208 to F209, R265, G287, and Q296 each bind ATP.

The protein belongs to the ThiI family.

It localises to the cytoplasm. It carries out the reaction [ThiI sulfur-carrier protein]-S-sulfanyl-L-cysteine + a uridine in tRNA + 2 reduced [2Fe-2S]-[ferredoxin] + ATP + H(+) = [ThiI sulfur-carrier protein]-L-cysteine + a 4-thiouridine in tRNA + 2 oxidized [2Fe-2S]-[ferredoxin] + AMP + diphosphate. It catalyses the reaction [ThiS sulfur-carrier protein]-C-terminal Gly-Gly-AMP + S-sulfanyl-L-cysteinyl-[cysteine desulfurase] + AH2 = [ThiS sulfur-carrier protein]-C-terminal-Gly-aminoethanethioate + L-cysteinyl-[cysteine desulfurase] + A + AMP + 2 H(+). The protein operates within cofactor biosynthesis; thiamine diphosphate biosynthesis. In terms of biological role, catalyzes the ATP-dependent transfer of a sulfur to tRNA to produce 4-thiouridine in position 8 of tRNAs, which functions as a near-UV photosensor. Also catalyzes the transfer of sulfur to the sulfur carrier protein ThiS, forming ThiS-thiocarboxylate. This is a step in the synthesis of thiazole, in the thiamine biosynthesis pathway. The sulfur is donated as persulfide by IscS. This is Probable tRNA sulfurtransferase from Streptococcus pyogenes serotype M4 (strain MGAS10750).